Consider the following 257-residue polypeptide: 5-keto-4-deoxy-D-glucarate aldolase (257 aa).

The active-site Proton acceptor is the H51. Q152 lines the substrate pocket. E154 contributes to the Mg(2+) binding site. 2 residues coordinate substrate: S179 and D180. A Mg(2+)-binding site is contributed by D180.

This sequence belongs to the HpcH/HpaI aldolase family. KDGluc aldolase subfamily. In terms of assembly, homohexamer; trimer of dimers. Requires Mg(2+) as cofactor.

The catalysed reaction is 5-dehydro-4-deoxy-D-glucarate = 2-hydroxy-3-oxopropanoate + pyruvate. The enzyme catalyses 2-dehydro-3-deoxy-D-glucarate = 2-hydroxy-3-oxopropanoate + pyruvate. It participates in carbohydrate acid metabolism; galactarate degradation; D-glycerate from galactarate: step 2/3. Functionally, catalyzes the reversible retro-aldol cleavage of both 5-keto-4-deoxy-D-glucarate and 2-keto-3-deoxy-D-glucarate to pyruvate and tartronic semialdehyde. The polypeptide is 5-keto-4-deoxy-D-glucarate aldolase (Shigella boydii serotype 18 (strain CDC 3083-94 / BS512)).